The following is a 518-amino-acid chain: Nitrogenase iron-iron protein alpha chain (518 aa).

3 residues coordinate [8Fe-7S] cluster: Cys-49, Cys-75, and Cys-138. [8Fe-9S-C-homocitryl] cluster contacts are provided by Cys-257 and His-423.

Belongs to the NifD/NifK/NifE/NifN family. As to quaternary structure, hexamer of two alpha, two beta, and two delta chains. The cofactor is [8Fe-7S] cluster. Requires [8Fe-9S-C-homocitryl] cluster as cofactor.

It catalyses the reaction N2 + 8 reduced [2Fe-2S]-[ferredoxin] + 16 ATP + 16 H2O = H2 + 8 oxidized [2Fe-2S]-[ferredoxin] + 2 NH4(+) + 16 ADP + 16 phosphate + 6 H(+). Its function is as follows. This iron-iron protein is part of the nitrogenase complex that catalyzes the key enzymatic reactions in nitrogen fixation. Other nitrogenase complexes utilize a molybdenum-iron protein or a vanadium-iron protein. The protein is Nitrogenase iron-iron protein alpha chain (anfD) of Azotobacter vinelandii.